A 174-amino-acid polypeptide reads, in one-letter code: Ribosome maturation factor RimP (174 aa).

The protein belongs to the RimP family.

Its subcellular location is the cytoplasm. Its function is as follows. Required for maturation of 30S ribosomal subunits. The chain is Ribosome maturation factor RimP from Bdellovibrio bacteriovorus (strain ATCC 15356 / DSM 50701 / NCIMB 9529 / HD100).